Reading from the N-terminus, the 469-residue chain is Glutamate--tRNA ligase (469 aa).

A 'HIGH' region motif is present at residues 11-21; the sequence is PSPTGFIHLGN. The span at 118-131 shows a compositional bias: basic and acidic residues; sequence GEKPRYDGTWRPEP. Positions 118–139 are disordered; it reads GEKPRYDGTWRPEPGKVLPEPP. Positions 243–247 match the 'KMSKS' region motif; sequence KMSKR. Lys246 contributes to the ATP binding site.

This sequence belongs to the class-I aminoacyl-tRNA synthetase family. Glutamate--tRNA ligase type 1 subfamily. In terms of assembly, monomer.

The protein resides in the cytoplasm. It catalyses the reaction tRNA(Glu) + L-glutamate + ATP = L-glutamyl-tRNA(Glu) + AMP + diphosphate. Catalyzes the attachment of glutamate to tRNA(Glu) in a two-step reaction: glutamate is first activated by ATP to form Glu-AMP and then transferred to the acceptor end of tRNA(Glu). The chain is Glutamate--tRNA ligase from Burkholderia mallei (strain NCTC 10247).